The chain runs to 222 residues: MGRCLLIEPGLVPYLTAWEWQRQLMATRIAHRDRPDVLMLLEHPPVYTLGQGADAKHVLVDPASIELYRTERGGEVTYHGPGQLVGYPILDLTGYRQDLHWYLRTLEQVLIEVLADFGVQGEREAGFTGVWAGGRKIAALGIKVSRWVTMHGFALNVDPDLDAFARIVPCGLTRPVGSLVQLCPGVSVEQVQPVVACAFARVFGVQCEPGALEACLAVKPGC.

The region spanning 32–207 (RDRPDVLMLL…AFARVFGVQC (176 aa)) is the BPL/LPL catalytic domain. Residues 72–79 (RGGEVTYH), 139–141 (ALG), and 152–154 (GFA) contribute to the substrate site. The Acyl-thioester intermediate role is filled by Cys170.

This sequence belongs to the LipB family.

The protein resides in the cytoplasm. It catalyses the reaction octanoyl-[ACP] + L-lysyl-[protein] = N(6)-octanoyl-L-lysyl-[protein] + holo-[ACP] + H(+). Its pathway is protein modification; protein lipoylation via endogenous pathway; protein N(6)-(lipoyl)lysine from octanoyl-[acyl-carrier-protein]: step 1/2. Its function is as follows. Catalyzes the transfer of endogenously produced octanoic acid from octanoyl-acyl-carrier-protein onto the lipoyl domains of lipoate-dependent enzymes. Lipoyl-ACP can also act as a substrate although octanoyl-ACP is likely to be the physiological substrate. This Gloeobacter violaceus (strain ATCC 29082 / PCC 7421) protein is Octanoyltransferase.